The following is a 176-amino-acid chain: DNA-directed RNA polymerase II subunit 7 (176 aa).

It belongs to the eukaryotic RPB7/RPC8 RNA polymerase subunit family. In terms of assembly, component of the RNA polymerase II complex consisting of at least 12 subunits. Interacts with NRPB4.

The protein resides in the nucleus. In terms of biological role, DNA-dependent RNA polymerase catalyzes the transcription of DNA into RNA using the four ribonucleoside triphosphates as substrates. Component of RNA polymerase II which synthesizes mRNA precursors and many functional non-coding RNAs. Pol II is the central component of the basal RNA polymerase II transcription machinery. It is composed of mobile elements that move relative to each other. NRPB7 is part of a subcomplex with NRPB4 that binds to a pocket formed by NRPB1, NRPB2 and NRPB6 at the base of the clamp element. The NRBP4-NRPB7 subcomplex seems to lock the clamp via NRPB7 in the closed conformation thus preventing double-stranded DNA to enter the active site cleft. The NRPB4-NRPB7 subcomplex binds single-stranded DNA and RNA. This is DNA-directed RNA polymerase II subunit 7 (NRPB7) from Arabidopsis thaliana (Mouse-ear cress).